Consider the following 428-residue polypeptide: Elongation factor 1-alpha (428 aa).

A tr-type G domain is found at 5–225; that stretch reads KPILNVAFIG…DAFQPPEKPT (221 aa). Residues 14 to 21 are G1; it reads GHVDAGKS. 14–21 provides a ligand contact to GTP; the sequence is GHVDAGKS. Position 21 (S21) interacts with Mg(2+). The interval 70–74 is G2; it reads GVTID. Residues 91-94 form a G3 region; it reads DCPG. GTP contacts are provided by residues 91 to 95 and 149 to 152; these read DCPGH and NKMD. A G4 region spans residues 149-152; it reads NKMD. The segment at 189–191 is G5; that stretch reads ASL.

It belongs to the TRAFAC class translation factor GTPase superfamily. Classic translation factor GTPase family. EF-Tu/EF-1A subfamily.

The protein resides in the cytoplasm. The enzyme catalyses GTP + H2O = GDP + phosphate + H(+). GTP hydrolase that promotes the GTP-dependent binding of aminoacyl-tRNA to the A-site of ribosomes during protein biosynthesis. This Methanococcus maripaludis (strain C5 / ATCC BAA-1333) protein is Elongation factor 1-alpha.